A 979-amino-acid polypeptide reads, in one-letter code: Protein SMAX1-LIKE 6 (979 aa).

Residues 8–190 (ARECLTEEAA…PVTQLSSRFS (183 aa)) enclose the Clp R domain. 2 repeat regions span residues 12–86 (LTEE…LDRL) and 100–190 (VSNS…SRFS). The short motif at 833–837 (LDLNL) is the EAR element.

It belongs to the ClpA/ClpB family. As to quaternary structure, interacts with TPL/TPR in an EAR-motif dependent manner. Interacts with TPR3. Interacts with MAX2 and TPR2. Interacts with D14. The interaction with D14 occurs in the presence of (2'R) stereoisomers of strigolactones, but not (2'S) stereoisomers. Ubiquitinated upon strigolactone treatment. Probable proteolytic target of SCF(MAX2)-mediated stigolactone signaling. In terms of tissue distribution, detected in roots, seedlings and axillary branches. Expressed in the primary rosette buds and expanding leaves of adult rosettes, the vasculature of the hypocotyls, cotyledons, and mature roots, and in the midvein and petioles of young leaves.

The protein resides in the nucleus. Probable component of a transcriptional corepressor complex involved in branching control. Regulates cotyledon expansion and lateral root growth, but not germination or hypocotyl elongation. Promotes auxin transport and PIN1 accumulation in the stem and represses BRC1/TCP18 expression in axillary buds. This Arabidopsis thaliana (Mouse-ear cress) protein is Protein SMAX1-LIKE 6.